Reading from the N-terminus, the 156-residue chain is Ribonuclease 1B pancreatic (156 aa).

A signal peptide spans 1–28; the sequence is MALDKSVIPLPLLVVVLLVLGWAQPSLG. Residues lysine 35 and arginine 38 each contribute to the substrate site. Histidine 40 acts as the Proton acceptor in catalysis. Disulfide bonds link cysteine 54–cysteine 112, cysteine 68–cysteine 123, cysteine 86–cysteine 138, and cysteine 93–cysteine 100. The N-linked (GlcNAc...) asparagine glycan is linked to asparagine 62. Substrate contacts are provided by residues 69-73, lysine 94, and arginine 113; that span reads KSVNT. Asparagine 116 carries N-linked (GlcNAc...) asparagine glycosylation. Catalysis depends on histidine 147, which acts as the Proton donor.

Belongs to the pancreatic ribonuclease family. As to quaternary structure, monomer.

Its subcellular location is the secreted. The enzyme catalyses an [RNA] containing cytidine + H2O = an [RNA]-3'-cytidine-3'-phosphate + a 5'-hydroxy-ribonucleotide-3'-[RNA].. It catalyses the reaction an [RNA] containing uridine + H2O = an [RNA]-3'-uridine-3'-phosphate + a 5'-hydroxy-ribonucleotide-3'-[RNA].. Its function is as follows. Endonuclease that catalyzes the cleavage of RNA on the 3' side of pyrimidine nucleotides. Compared to RNASE1 it has lost activity towards dsRNA. The sequence is that of Ribonuclease 1B pancreatic (RNASE1B) from Pygathrix nemaeus (Red-shanked douc langur).